The chain runs to 353 residues: Elongation factor Ts (353 aa).

Residues 80 to 83 form an involved in Mg(2+) ion dislocation from EF-Tu region; it reads TDFV.

Belongs to the EF-Ts family.

It is found in the cytoplasm. In terms of biological role, associates with the EF-Tu.GDP complex and induces the exchange of GDP to GTP. It remains bound to the aminoacyl-tRNA.EF-Tu.GTP complex up to the GTP hydrolysis stage on the ribosome. This Sulfurovum sp. (strain NBC37-1) protein is Elongation factor Ts.